A 393-amino-acid polypeptide reads, in one-letter code: NAD(P)H-quinone oxidoreductase subunit H, chloroplastic (393 aa).

The protein belongs to the complex I 49 kDa subunit family. NDH is composed of at least 16 different subunits, 5 of which are encoded in the nucleus.

The protein localises to the plastid. It localises to the chloroplast thylakoid membrane. The enzyme catalyses a plastoquinone + NADH + (n+1) H(+)(in) = a plastoquinol + NAD(+) + n H(+)(out). It catalyses the reaction a plastoquinone + NADPH + (n+1) H(+)(in) = a plastoquinol + NADP(+) + n H(+)(out). Functionally, NDH shuttles electrons from NAD(P)H:plastoquinone, via FMN and iron-sulfur (Fe-S) centers, to quinones in the photosynthetic chain and possibly in a chloroplast respiratory chain. The immediate electron acceptor for the enzyme in this species is believed to be plastoquinone. Couples the redox reaction to proton translocation, and thus conserves the redox energy in a proton gradient. The protein is NAD(P)H-quinone oxidoreductase subunit H, chloroplastic of Zygnema circumcarinatum (Green alga).